A 138-amino-acid chain; its full sequence is Large ribosomal subunit protein uL16 (138 aa).

The protein belongs to the universal ribosomal protein uL16 family. Part of the 50S ribosomal subunit.

In terms of biological role, binds 23S rRNA and is also seen to make contacts with the A and possibly P site tRNAs. This is Large ribosomal subunit protein uL16 from Syntrophobacter fumaroxidans (strain DSM 10017 / MPOB).